The chain runs to 465 residues: Cysteine--tRNA ligase (465 aa).

Position 27 (cysteine 27) interacts with Zn(2+). The short motif at 29–39 (PTVYNFFHIGN) is the 'HIGH' region element. Zn(2+)-binding residues include cysteine 207, histidine 232, and glutamate 236. The 'KMSKS' region signature appears at 264 to 268 (KMSKS). Lysine 267 provides a ligand contact to ATP.

This sequence belongs to the class-I aminoacyl-tRNA synthetase family. In terms of assembly, monomer. Zn(2+) serves as cofactor.

Its subcellular location is the cytoplasm. The catalysed reaction is tRNA(Cys) + L-cysteine + ATP = L-cysteinyl-tRNA(Cys) + AMP + diphosphate. The sequence is that of Cysteine--tRNA ligase from Clostridium kluyveri (strain NBRC 12016).